A 137-amino-acid chain; its full sequence is Large ribosomal subunit protein uL16 (137 aa).

Belongs to the universal ribosomal protein uL16 family. Part of the 50S ribosomal subunit.

Its function is as follows. Binds 23S rRNA and is also seen to make contacts with the A and possibly P site tRNAs. The sequence is that of Large ribosomal subunit protein uL16 from Xylella fastidiosa (strain M23).